The sequence spans 613 residues: tRNA 5-methylaminomethyl-2-thiouridine biosynthesis bifunctional protein MnmC (613 aa).

Residues 1–225 (MKKAKLIFKD…KREMIKAYLE (225 aa)) are tRNA (mnm(5)s(2)U34)-methyltransferase. The interval 252–613 (IGAGISSAVL…FLIRKLKKGL (362 aa)) is FAD-dependent cmnm(5)s(2)U34 oxidoreductase.

The protein in the N-terminal section; belongs to the methyltransferase superfamily. tRNA (mnm(5)s(2)U34)-methyltransferase family. It in the C-terminal section; belongs to the DAO family. The cofactor is FAD.

It is found in the cytoplasm. The enzyme catalyses 5-aminomethyl-2-thiouridine(34) in tRNA + S-adenosyl-L-methionine = 5-methylaminomethyl-2-thiouridine(34) in tRNA + S-adenosyl-L-homocysteine + H(+). Its function is as follows. Catalyzes the last two steps in the biosynthesis of 5-methylaminomethyl-2-thiouridine (mnm(5)s(2)U) at the wobble position (U34) in tRNA. Catalyzes the FAD-dependent demodification of cmnm(5)s(2)U34 to nm(5)s(2)U34, followed by the transfer of a methyl group from S-adenosyl-L-methionine to nm(5)s(2)U34, to form mnm(5)s(2)U34. This Campylobacter jejuni (strain RM1221) protein is tRNA 5-methylaminomethyl-2-thiouridine biosynthesis bifunctional protein MnmC.